The following is a 325-amino-acid chain: Alpha-cuprenene synthase COP6 (325 aa).

Positions 102, 166, 224, 228, and 232 each coordinate Mg(2+).

It belongs to the trichodiene synthase family. It depends on Mg(2+) as a cofactor.

In terms of biological role, alpha-cuprenene synthase; part of the gene cluster that mediates the biosynthesis of alpha-cuprenene and oxidized derivatives. The alpha-cuprenene synthase COP6 is the only sesquiterpene synthase identified in C.cinereus that appears to be part of a biosynthetic gene cluster and is highly specific since it catalyzes the cyclization of (2E,6E)-farnesyl diphosphate into only one product, alpha-cuprenene. COP6 is also able to perform the cyclization of geranyl diphosphate. The cytochrome P450 monooxygenase COX2 then oxidizes the cyclohexadiene ring of alpha-cuprenene at positions 1 and 4, yielding first alpha-cuparene, followed by alpha-cuparophenol and a further yet unidentified compound resulting from one additional oxidation step. The cytochrome P450 monooxygenase COX1 then likely catalyzes the oxidation at position 9 of the pentane ring of alpha-cuprenene to give the corresponding hydroxy or ketone derivatives. This chain is Alpha-cuprenene synthase COP6, found in Coprinopsis cinerea (strain Okayama-7 / 130 / ATCC MYA-4618 / FGSC 9003) (Inky cap fungus).